Reading from the N-terminus, the 673-residue chain is DNA ligase (673 aa).

Residues 33 to 37, 82 to 83, and glutamate 117 contribute to the NAD(+) site; these read DSVYD and SL. The active-site N6-AMP-lysine intermediate is the lysine 119. Residues arginine 140, glutamate 177, lysine 295, and lysine 319 each coordinate NAD(+). Residues cysteine 413, cysteine 416, cysteine 431, and cysteine 436 each coordinate Zn(2+). The 79-residue stretch at 595–673 folds into the BRCT domain; sequence AVSQVLAGKK…EAELLALDPK (79 aa).

The protein belongs to the NAD-dependent DNA ligase family. LigA subfamily. Mg(2+) is required as a cofactor. It depends on Mn(2+) as a cofactor.

The enzyme catalyses NAD(+) + (deoxyribonucleotide)n-3'-hydroxyl + 5'-phospho-(deoxyribonucleotide)m = (deoxyribonucleotide)n+m + AMP + beta-nicotinamide D-nucleotide.. Functionally, DNA ligase that catalyzes the formation of phosphodiester linkages between 5'-phosphoryl and 3'-hydroxyl groups in double-stranded DNA using NAD as a coenzyme and as the energy source for the reaction. It is essential for DNA replication and repair of damaged DNA. The chain is DNA ligase from Synechococcus sp. (strain JA-3-3Ab) (Cyanobacteria bacterium Yellowstone A-Prime).